Consider the following 697-residue polypeptide: Colicin-D (697 aa).

A TonB box motif is present at residues 17-24 (HSMVVWPS).

Belongs to the cloacin colicin family.

Its function is as follows. Colicins are polypeptide toxins produced by and active against E.coli and closely related bacteria. Colicin D inhibits protein synthesis. The sequence is that of Colicin-D (cda) from Escherichia coli.